Reading from the N-terminus, the 247-residue chain is UPF0273 protein PH0284 (247 aa).

The KaiC domain maps to 3–247 (RRVKTGIPGV…VLKRGKVLEL (245 aa)). Residue 30–37 (GGPGTGKT) participates in ATP binding.

This sequence belongs to the UPF0273 family.

In Pyrococcus horikoshii (strain ATCC 700860 / DSM 12428 / JCM 9974 / NBRC 100139 / OT-3), this protein is UPF0273 protein PH0284.